The sequence spans 99 residues: UPF0235 protein HS_1657 (99 aa).

Belongs to the UPF0235 family.

The sequence is that of UPF0235 protein HS_1657 from Histophilus somni (strain 129Pt) (Haemophilus somnus).